The primary structure comprises 578 residues: Acyl-CoA synthetase ACTT5 (578 aa).

Residue 211-222 participates in AMP binding; it reads RLTTSGTTGLPK. The segment at 472 to 551 is AMP-binding; the sequence is ELEAALLQAK…DEIPRSPTGK (80 aa).

This sequence belongs to the ATP-dependent AMP-binding enzyme family.

It participates in mycotoxin biosynthesis. In terms of biological role, acyl-CoA synthetase; part of the gene clusters that mediate the biosynthesis of the host-selective toxins (HSTs) ACT-toxins responsible for brown spot of tangerine disease by the tangerine pathotype which affects tangerines and mandarins. ACT-toxins consist of three moieties, 9,10-epoxy-8-hydroxy-9-methyl-decatrienoic acid (EDA), valine and a polyketide. ACT-toxin I is toxic to both citrus and pear; toxin II the 5''-deoxy derivative of ACT-toxin I, is highly toxic to pear and slightly toxic to citrus. On cellular level, ACT-toxins affect plasma membrane of susceptible cells and cause a sudden increase in loss of K(+) after a few minutes of toxin treatment. The acyl-CoA ligase ACTT1, the hydrolase ACTT2, the enoyl-CoA hydratases ACTT3 and ACTT6, and the acyl-CoA synthetase ACTT5 are all involved in the biosynthesis of the AK-, AF- and ACT-toxin common 9,10-epoxy-8-hydroxy-9-methyl-decatrienoic acid (EDA) structural moiety. The exact role of each enzyme, and of additional enzymes identified within the AF-toxin clusters have still to be determined. On the other hand, ACTTS1 to ACTTS4 are specific to the tangerine pathotype. The function of ACTTS3 is to elongate the polyketide chain portion of ACT-toxin that is unique to this toxin. The enoyl-reductase ACTTS2 might complement the missing enoyl-reductase (ER) domain in ACTTS3 in the synthesis of the polyketide portion of ACT-toxin. The roles of the nonribosomal peptide synthetases-related proteins ACTTS1 and ACTTS4 have also still not been elucidated. This chain is Acyl-CoA synthetase ACTT5, found in Alternaria alternata (Alternaria rot fungus).